Reading from the N-terminus, the 537-residue chain is Sodium/hydrogen exchanger 9B2 (537 aa).

Over residues 1–10 (MGDEDKRITY) the composition is skewed to basic and acidic residues. The interval 1 to 28 (MGDEDKRITYEDSEPSTGMNYTPSMHQE) is disordered. Over 1-86 (MGDEDKRITY…ACPPHGLLDR (86 aa)) the chain is Cytoplasmic. The segment covering 15 to 27 (PSTGMNYTPSMHQ) has biased composition (polar residues). Ser-49 is subject to Phosphoserine. A helical membrane pass occupies residues 87 to 104 (VITNVTIIVLLWAVVWSI). Topologically, residues 105–113 (TGSECLPGG) are extracellular. Residues 114–133 (NLFGIIILFYCAIIGGKLLG) traverse the membrane as a helical segment. Topologically, residues 134–144 (LIKLPTLPPLP) are cytoplasmic. Residues 145–161 (SLLGMLLAGFLIRNIPV) traverse the membrane as a helical segment. The Extracellular portion of the chain corresponds to 162–171 (INDNVQIKHK). A helical transmembrane segment spans residues 172–189 (WSSSLRSIALSIILVRAG). Residues 190 to 200 (LGLDSKALKKL) lie on the Cytoplasmic side of the membrane. Residues 201-227 (KGVCVRLSMGPCIVEACTSALLAHYLL) form a helical membrane-spanning segment. Topologically, residues 228–233 (GLPWQW) are extracellular. A helical membrane pass occupies residues 234 to 242 (GFILGFVLG). At 243–270 (AVSPAVVVPSMLLLQGGGYGVEKGVPTL) the chain is on the cytoplasmic side. The Na(+) site is built by Val-244, Gly-275, Asp-278, and Asp-279. The chain crosses the membrane as a helical span at residues 271-290 (LMAAGSFDDILAITGFNTCL). Topologically, residues 291-300 (GIAFSTGSTV) are extracellular. Residues 301 to 324 (FNVLRGVLEVVIGVATGSVLGFFI) form a helical membrane-spanning segment. The Cytoplasmic portion of the chain corresponds to 325–339 (QYFPSRDQDKLVCKR). The helical transmembrane segment at 340–357 (TFLVLGLSVLAVFSSVHF) threads the bilayer. Residues 358-361 (GFPG) are Extracellular-facing. A helical membrane pass occupies residues 362 to 373 (SGGLCTLVMAFL). Residues 374–390 (AGMGWTSEKAEVEKIIA) are Cytoplasmic-facing. Residues 391–411 (VAWDIFQPLLFGLIGAEVSIA) traverse the membrane as a helical segment. Residues 412–417 (SLRPET) lie on the Extracellular side of the membrane. A helical membrane pass occupies residues 418-440 (VGLCVATVGIAVLIRILTTFLMV). The Cytoplasmic portion of the chain corresponds to 441 to 461 (CFAGFNLKEKIFISFAWLPKA). Residues 462 to 473 (TVQAAIGSVALD) traverse the membrane as a helical segment. Over 474–486 (TARSHGEKQLEDY) the chain is Extracellular. The chain crosses the membrane as a helical span at residues 487-509 (GMDVLTVAFLSILITAPIGSLLI). Topologically, residues 510–537 (GLLGPRLLQKVEHQNKDEEVQGETSVQV) are cytoplasmic.

It belongs to the monovalent cation:proton antiporter 1 (CPA1) transporter (TC 2.A.36) family. As to quaternary structure, homodimer. Dimerization is essential for SLC9B2 activity. Lipids seem to play a role in the stabilization of the dimerization subdomain. Widely expressed. High levels detected in the distal tubules of the kidney nephron. Detected in red blood cells (at protein level).

It is found in the cell membrane. The protein resides in the mitochondrion membrane. It localises to the endosome membrane. The protein localises to the recycling endosome membrane. Its subcellular location is the cytoplasmic vesicle. It is found in the secretory vesicle. The protein resides in the synaptic vesicle membrane. It localises to the cell projection. The protein localises to the cilium. Its subcellular location is the flagellum membrane. It is found in the basolateral cell membrane. The protein resides in the apical cell membrane. The catalysed reaction is Li(+)(out) + H(+)(in) = Li(+)(in) + H(+)(out). It catalyses the reaction Li(+)(in) + Na(+)(out) = Li(+)(out) + Na(+)(in). It carries out the reaction Na(+)(in) + H(+)(out) = Na(+)(out) + H(+)(in). With respect to regulation, allosterically inhibited by the N-terminal domain. Inhibited by phloretin. Functionally, electroneutral Na(+) Li(+)/H(+) antiporter that extrudes Na(+) or Li(+) in exchange for external protons across the membrane. Uses the proton gradient/membrane potential to extrude sodium. Contributes to the regulation of intracellular pH and sodium homeostasis. Also able to mediate Na(+)/Li(+) antiporter activity in kidney. May play a physiological role in renal tubular function and blood pressure homeostasis. Plays an important role for insulin secretion and clathrin-mediated endocytosis in beta-cells. Involved in sperm motility and fertility. It is controversial whether SLC9B2 plays a role in osteoclast differentiation or not. The polypeptide is Sodium/hydrogen exchanger 9B2 (Homo sapiens (Human)).